A 60-amino-acid chain; its full sequence is Mannitol-specific phosphotransferase enzyme IIA component (60 aa).

The 59-residue stretch at S2–D60 folds into the PTS EIIA type-2 domain. Catalysis depends on H56, which acts as the Tele-phosphohistidine intermediate. H56 carries the phosphohistidine; by HPr modification.

As to quaternary structure, homodimer or homotrimer. Seems to be a monomer when not phosphorylated.

It localises to the cytoplasm. The phosphoenolpyruvate-dependent sugar phosphotransferase system (sugar PTS), a major carbohydrate active transport system, catalyzes the phosphorylation of incoming sugar substrates concomitantly with their translocation across the cell membrane. The enzyme II CmtAB PTS system is involved in D-mannitol transport. In Staphylococcus aureus, this protein is Mannitol-specific phosphotransferase enzyme IIA component.